We begin with the raw amino-acid sequence, 145 residues long: Protein SprT-like (145 aa).

The SprT-like domain occupies 4-140; sequence TNYVQEVSLA…VCGNCHGKLI (137 aa). Residue H64 participates in Zn(2+) binding. E65 is a catalytic residue. H68 provides a ligand contact to Zn(2+).

This sequence belongs to the SprT family. Requires Zn(2+) as cofactor.

It is found in the cytoplasm. The chain is Protein SprT-like from Streptococcus pyogenes serotype M6 (strain ATCC BAA-946 / MGAS10394).